A 598-amino-acid chain; its full sequence is Elongation factor 4 (598 aa).

The tr-type G domain occupies 4–186 (INIRNFAIIA…AIVSRLPAPS (183 aa)). GTP is bound by residues 16–21 (DHGKST) and 133–136 (NKID).

It belongs to the TRAFAC class translation factor GTPase superfamily. Classic translation factor GTPase family. LepA subfamily.

The protein localises to the cell inner membrane. The catalysed reaction is GTP + H2O = GDP + phosphate + H(+). Required for accurate and efficient protein synthesis under certain stress conditions. May act as a fidelity factor of the translation reaction, by catalyzing a one-codon backward translocation of tRNAs on improperly translocated ribosomes. Back-translocation proceeds from a post-translocation (POST) complex to a pre-translocation (PRE) complex, thus giving elongation factor G a second chance to translocate the tRNAs correctly. Binds to ribosomes in a GTP-dependent manner. This is Elongation factor 4 from Ehrlichia ruminantium (strain Gardel).